The sequence spans 395 residues: MKSKKKIVLAYSGGLDTSIILKWLQENYDAEVICYTADVGQEIDRKKIIKNAKRLGVKNIIIEDLKDTFVKDYVFPMIRGHAIYEGVYLLGTSIARPLIAKRQIAAAKKFGAYAVSHGSTGKGNDQVRFELGYHYFGPKVKIIAPWRIWKLNSRTDLIKYAKKNNIPIPTDKKGAPPFSIDDNLYHTSTEGKVLENPKNSAPEFLFQRTVSPEKAPNKASFVTIGFKNGDPITVNGKKLSPGNLLEKLNNVAGKNGIGRVDLVENRFIGIKSRGVYETPGGTLLMSAHRAIESITLDKETMHKKDEIMPKYAELIYNGYWYSKARFKLQKIVDLKKNKVNGSVKLKLYKGNITIMSRQTKSNAYSMKKVSFEENKTFNKSNVERFINFHKQKLRS.

ATP-binding positions include 10 to 18 and alanine 37; that span reads AYSGGLDTS. Residues tyrosine 88 and serine 93 each coordinate L-citrulline. Residue glycine 118 coordinates ATP. Residues threonine 120, asparagine 124, and aspartate 125 each contribute to the L-aspartate site. Asparagine 124 provides a ligand contact to L-citrulline. L-citrulline is bound by residues arginine 128, serine 179, serine 188, glutamate 264, and tyrosine 276.

It belongs to the argininosuccinate synthase family. Type 1 subfamily. In terms of assembly, homotetramer.

The protein resides in the cytoplasm. It carries out the reaction L-citrulline + L-aspartate + ATP = 2-(N(omega)-L-arginino)succinate + AMP + diphosphate + H(+). Its pathway is amino-acid biosynthesis; L-arginine biosynthesis; L-arginine from L-ornithine and carbamoyl phosphate: step 2/3. The polypeptide is Argininosuccinate synthase (Pelagibacter ubique (strain HTCC1062)).